The following is a 315-amino-acid chain: Replication factor C small subunit (315 aa).

43 to 50 is a binding site for ATP; it reads GSPGVGKT.

The protein belongs to the activator 1 small subunits family. RfcS subfamily. Heteromultimer composed of small subunits (RfcS) and large subunits (RfcL).

In terms of biological role, part of the RFC clamp loader complex which loads the PCNA sliding clamp onto DNA. This is Replication factor C small subunit from Methanococcus maripaludis (strain C5 / ATCC BAA-1333).